A 296-amino-acid chain; its full sequence is MYLQLLKSLNRLHPRAWDFVQLSRMDRPIGIYLLLWPTLVAVWIAGNGSPSLKNVLIFALGVVLMRAAGCCINDFADRKVDGHVKRTADRPLASGRVKPREAVMLFALLVGVSFLLVLCTNATTVWLSFGAVALAFCYPFMKRYTYYPQVVLGAAYSWGIPMAFTAAGGELPASAWLLYIANLLWTVGYDTYYAMVDRDDDLKIGVKSTAILFGEADRVIILTLQLLSLGCLLLAGNRFDLGGWYHLGLLAAAACFAWEFWSTRKLDRESCFKAFLHNHWAGMLIFIGVVLDYALR.

Helical transmembrane passes span Pro28–Gly48, Val55–Phe75, Ala102–Ala122, Thr145–Ala167, Ser174–Val196, Val219–Phe239, Leu241–Trp261, and Phe275–Leu295.

Belongs to the UbiA prenyltransferase family. The cofactor is Mg(2+).

The protein localises to the cell inner membrane. The catalysed reaction is all-trans-octaprenyl diphosphate + 4-hydroxybenzoate = 4-hydroxy-3-(all-trans-octaprenyl)benzoate + diphosphate. It participates in cofactor biosynthesis; ubiquinone biosynthesis. Catalyzes the prenylation of para-hydroxybenzoate (PHB) with an all-trans polyprenyl group. Mediates the second step in the final reaction sequence of ubiquinone-8 (UQ-8) biosynthesis, which is the condensation of the polyisoprenoid side chain with PHB, generating the first membrane-bound Q intermediate 3-octaprenyl-4-hydroxybenzoate. The protein is 4-hydroxybenzoate octaprenyltransferase of Pseudomonas entomophila (strain L48).